Here is a 774-residue protein sequence, read N- to C-terminus: Chondroitin sulfate synthase 2 (774 aa).

The Cytoplasmic segment spans residues 1–15 (MRASLLLSVLRPAGP). The helical; Signal-anchor for type II membrane protein transmembrane segment at 16-34 (VAVGISLGFTLSLLSVTWV) threads the bilayer. At 35-774 (EEPCGPGPPQ…LFEQEQGNST (740 aa)) the chain is on the lumenal side. Positions 37 to 103 (PCGPGPPQPG…AQPGQATKKA (67 aa)) are disordered. Residues 54 to 67 (GNTNAARRPNSVQP) show a composition bias toward polar residues. 2 N-linked (GlcNAc...) asparagine glycosylation sites follow: N138 and N361. Residue D616 participates in a divalent metal cation binding.

This sequence belongs to the chondroitin N-acetylgalactosaminyltransferase family. In terms of assembly, interacts with PRKN. Mn(2+) is required as a cofactor. Co(2+) serves as cofactor. Isoform 1, isoform 2 and isoform 3 are expressed in brain (at protein level).

The protein resides in the golgi apparatus. It is found in the golgi stack membrane. It localises to the cytoplasm. Its subcellular location is the cytosol. The protein localises to the mitochondrion. The protein resides in the mitochondrion matrix. The enzyme catalyses 3-O-(beta-D-GlcA-(1-&gt;3)-beta-D-GalNAc-(1-&gt;4)-beta-D-GlcA-(1-&gt;3)-beta-D-Gal-(1-&gt;3)-beta-D-Gal-(1-&gt;4)-beta-D-Xyl)-L-seryl-[protein] + UDP-N-acetyl-alpha-D-galactosamine = 3-O-(beta-D-GalNAc-(1-&gt;4)-beta-D-GlcA-(1-&gt;3)-beta-D-GalNAc-(1-&gt;4)-beta-D-GlcA-(1-&gt;3)-beta-D-Gal-(1-&gt;3)-beta-D-Gal-(1-&gt;4)-beta-D-Xyl)-L-seryl-[protein] + UDP + H(+). It catalyses the reaction 3-O-{beta-D-GlcA-(1-&gt;3)-[beta-D-GalNAc-(1-&gt;4)-beta-D-GlcA-(1-&gt;3)](n)-beta-D-GalNAc-(1-&gt;4)-beta-D-GlcA-(1-&gt;3)-beta-D-Gal-(1-&gt;3)-beta-D-Gal-(1-&gt;4)-beta-D-Xyl}-L-seryl-[protein] + UDP-N-acetyl-alpha-D-galactosamine = 3-O-{[beta-D-GalNAc-(1-&gt;4)-beta-D-GlcA-(1-&gt;3)](n+1)-beta-D-GalNAc-(1-&gt;4)-beta-D-GlcA-(1-&gt;3)-beta-D-Gal-(1-&gt;3)-beta-D-Gal-(1-&gt;4)-beta-D-Xyl}-L-seryl-[protein] + UDP + H(+). It carries out the reaction 3-O-(beta-D-GalNAc-(1-&gt;4)-beta-D-GlcA-(1-&gt;3)-beta-D-Gal-(1-&gt;3)-beta-D-Gal-(1-&gt;4)-beta-D-Xyl)-L-seryl-[protein] + UDP-alpha-D-glucuronate = 3-O-(beta-D-GlcA-(1-&gt;3)-beta-D-GalNAc-(1-&gt;4)-beta-D-GlcA-(1-&gt;3)-beta-D-Gal-(1-&gt;3)-beta-D-Gal-(1-&gt;4)-beta-D-Xyl)-L-seryl-[protein] + UDP + H(+). The catalysed reaction is 3-O-{[beta-D-GalNAc-(1-&gt;4)-beta-D-GlcA-(1-&gt;3)](n)-beta-D-GalNAc-(1-&gt;4)-beta-D-GlcA-(1-&gt;3)-beta-D-Gal-(1-&gt;3)-beta-D-Gal-(1-&gt;4)-beta-D-Xyl}-L-seryl-[protein] + UDP-alpha-D-glucuronate = 3-O-{beta-D-GlcA-(1-&gt;3)-[beta-D-GalNAc-(1-&gt;4)-beta-D-GlcA-(1-&gt;3)](n)-beta-D-GalNAc-(1-&gt;4)-beta-D-GlcA-(1-&gt;3)-beta-D-Gal-(1-&gt;3)-beta-D-Gal-(1-&gt;4)-beta-D-Xyl}-L-seryl-[protein] + UDP + H(+). Its function is as follows. Has both beta-1,3-glucuronic acid and beta-1,4-N-acetylgalactosamine transferase activity. Transfers glucuronic acid (GlcUA) from UDP-GlcUA and N-acetylgalactosamine (GalNAc) from UDP-GalNAc to the non-reducing end of the elongating chondroitin polymer. Seems to act as a specific activating factor for CHSY1 in chondroitin polymerization. In terms of biological role, may facilitate PRKN transport into the mitochondria. In collaboration with PRKN, may enhance cell viability and protect cells from oxidative stress. The polypeptide is Chondroitin sulfate synthase 2 (Mus musculus (Mouse)).